The following is a 532-amino-acid chain: Flavin-containing monooxygenase 3 (532 aa).

FAD is bound by residues 9-13 (GAGVS), Glu32, 40-41 (LW), and 61-62 (NS). Residues 60–61 (TN) and 195–198 (SGCD) each bind NADP(+). Ser401 carries the post-translational modification Phosphoserine. A helical transmembrane segment spans residues 510–530 (FFFHWLKPFAIPILLIAVFLG).

It belongs to the FMO family. The cofactor is FAD. Liver.

It is found in the microsome membrane. Its subcellular location is the endoplasmic reticulum membrane. The catalysed reaction is trimethylamine + NADPH + O2 = trimethylamine N-oxide + NADP(+) + H2O. The enzyme catalyses N,N-dimethylaniline + NADPH + O2 + H(+) = N,N-dimethylaniline N-oxide + NADP(+) + H2O. It carries out the reaction hypotaurine + NADPH + O2 + H(+) = taurine + NADP(+) + H2O. It catalyses the reaction (S)-nicotine + NADPH + O2 = trans-(S)-nicotine N(1')-oxide + NADP(+) + H2O. The catalysed reaction is albendazole + NADPH + O2 + H(+) = albendazole S-oxide + NADP(+) + H2O. Its function is as follows. Essential hepatic enzyme that catalyzes the oxygenation of a wide variety of nitrogen- and sulfur-containing compounds including drugs as well as dietary compounds. Plays an important role in the metabolism of trimethylamine (TMA), via the production of trimethylamine N-oxide (TMAO) metabolite. TMA is generated by the action of gut microbiota using dietary precursors such as choline, choline containing compounds, betaine or L-carnitine. By regulating TMAO concentration, FMO3 directly impacts both platelet responsiveness and rate of thrombus formation. The chain is Flavin-containing monooxygenase 3 (FMO3) from Macaca mulatta (Rhesus macaque).